The sequence spans 103 residues: Histone H4 (103 aa).

Positions 1 to 14 are enriched in gly residues; it reads MSGRGKGGKGLGKG. The disordered stretch occupies residues 1 to 20; the sequence is MSGRGKGGKGLGKGGAKRHR. Position 6 is an N6-acetyl-N6-methyllysine; alternate (Lys6). N6-methyllysine; alternate is present on residues Lys6, Lys9, and Lys13. Lys13 bears the N6-acetyl-N6-methyllysine; alternate mark. A DNA-binding region spans residues 17-21; sequence KRHRK. The residue at position 92 (Lys92) is an N6-glutaryllysine.

This sequence belongs to the histone H4 family. The nucleosome is a histone octamer containing two molecules each of H2A, H2B, H3 and H4 assembled in one H3-H4 heterotetramer and two H2A-H2B heterodimers. The octamer wraps approximately 147 bp of DNA. In terms of processing, glutarylation at Lys-92 (H4K91glu) destabilizes nucleosomes by promoting dissociation of the H2A-H2B dimers from nucleosomes.

The protein localises to the nucleus. It is found in the chromosome. Its function is as follows. Core component of nucleosome. Nucleosomes wrap and compact DNA into chromatin, limiting DNA accessibility to the cellular machineries which require DNA as a template. Histones thereby play a central role in transcription regulation, DNA repair, DNA replication and chromosomal stability. DNA accessibility is regulated via a complex set of post-translational modifications of histones, also called histone code, and nucleosome remodeling. The protein is Histone H4 (H4.1) of Phanerodontia chrysosporium (White-rot fungus).